Reading from the N-terminus, the 304-residue chain is Mitochondrial glycine transporter (304 aa).

Solcar repeat units lie at residues 25-114 (HPVI…LKQY), 121-205 (PTAL…TKNI), and 215-299 (LIPI…MMAK). 6 helical membrane-spanning segments follow: residues 31-56 (FLCG…TRLQ), 89-115 (GMSP…KQYF), 127-152 (VMLG…TRYE), 180-203 (GLTA…NQTK), 219-245 (TNFS…KTHM), and 274-292 (GGIP…AWTV).

Belongs to the mitochondrial carrier (TC 2.A.29) family. SLC25A38 subfamily. Preferentially expressed in erythroid cells.

It localises to the mitochondrion inner membrane. It carries out the reaction glycine(in) = glycine(out). In terms of biological role, mitochondrial glycine transporter that imports glycine into the mitochondrial matrix. Plays an important role in providing glycine for the first enzymatic step in heme biosynthesis, the condensation of glycine with succinyl-CoA to produce 5-aminolevulinate (ALA) in the mitochondrial matrix. Required during erythropoiesis. Functionally, plays a role as pro-apoptotic protein that induces caspase-dependent apoptosis. The protein is Mitochondrial glycine transporter of Homo sapiens (Human).